We begin with the raw amino-acid sequence, 786 residues long: Rho GTPase-activating protein 10 (786 aa).

A BAR domain is found at 7–262 (EFSDCYLDSP…IRQNPKDHKR (256 aa)). Residues 265–372 (QFTAEGYLYV…WLEALGGKEA (108 aa)) enclose the PH domain. The 186-residue stretch at 389-574 (AQLDKMGFTI…ILIENHEKIF (186 aa)) folds into the Rho-GAP domain. 2 disordered regions span residues 576 to 608 (TPPD…QRTK) and 621 to 727 (EDGD…PPES). A compositionally biased stretch (basic residues) spans 599-608 (QSKRQGQRTK). A compositionally biased stretch (low complexity) spans 634–651 (PTSSLDSLSSPSPVTTAV). Residues 676-688 (IPGQTRSSMVQWL) are compositionally biased toward polar residues. Over residues 689 to 712 (NPQSPTTTSSNSAVTPLSPGSSPF) the composition is skewed to low complexity. In terms of domain architecture, SH3 spans 728 to 786 (IRSRKARAVYPCEAEHSSELSFEIGAIFEDVQTSREPGWLEGTLNGKRGLIPQNYVKLL).

As to quaternary structure, interacts with PKN3. Interacts with caspase-activated PAK2 proteolytic fragment PAK-2p34; the interaction does not affect GRAF2/ARHGAP10 GTPase activation activity towards RHOA and CDC42. Interacts via its SH3 domain with PTK2/FAK1. Interacts with PTK2B/PYK2; the interaction negatively regulates GRAF2/ARHGAP10 GTPase-activating activity. Interacts with MICAL1 and WDR44; complex formation might transit from GRAF2/ARHGAP10-MICAL1 to GRAF2/ARHGAP10-WDR44 complexes. Post-translationally, phosphorylated. Phosphorylated in vitro by constitutive active PKN3. High levels of expression in heart and skeletal muscle.

The protein localises to the cytoplasm. It is found in the perinuclear region. Its subcellular location is the cell membrane. It localises to the endosome membrane. Its function is as follows. GTPase-activating protein that catalyzes the conversion of active GTP-bound Rho GTPases to their inactive GDP-bound form, thus suppressing various Rho GTPase-mediated cellular processes. Also converts Cdc42 to an inactive GDP-bound state. Essential for PTKB2 regulation of cytoskeletal organization via Rho family GTPases. Inhibits PAK2 proteolytic fragment PAK-2p34 kinase activity and changes its localization from the nucleus to the perinuclear region. Stabilizes PAK-2p34 thereby increasing stimulation of cell death. Associates with MICAL1 on the endosomal membrane to promote Rab8-Rab10-dependent tubule extension. After dissociation with MICAL1, recruits WDR44 which connects the endoplasmic reticulum (ER) with the endosomal tubule, thereby participating in the export of a subset of neosynthesized proteins. This is Rho GTPase-activating protein 10 (ARHGAP10) from Homo sapiens (Human).